The following is a 102-amino-acid chain: NADH-quinone oxidoreductase subunit K (102 aa).

Transmembrane regions (helical) follow at residues 5–25, 31–51, and 62–82; these read LGHF…GIFL, IVLL…FVAF, and IFVF…LALL.

Belongs to the complex I subunit 4L family. In terms of assembly, NDH-1 is composed of 14 different subunits. Subunits NuoA, H, J, K, L, M, N constitute the membrane sector of the complex.

It localises to the cell inner membrane. The catalysed reaction is a quinone + NADH + 5 H(+)(in) = a quinol + NAD(+) + 4 H(+)(out). In terms of biological role, NDH-1 shuttles electrons from NADH, via FMN and iron-sulfur (Fe-S) centers, to quinones in the respiratory chain. The immediate electron acceptor for the enzyme in this species is believed to be ubiquinone. Couples the redox reaction to proton translocation (for every two electrons transferred, four hydrogen ions are translocated across the cytoplasmic membrane), and thus conserves the redox energy in a proton gradient. The polypeptide is NADH-quinone oxidoreductase subunit K (Variovorax paradoxus (strain S110)).